Here is a 106-residue protein sequence, read N- to C-terminus: Flagellar transcriptional regulator FlhD (106 aa).

Belongs to the FlhD family. In terms of assembly, homodimer; disulfide-linked. Forms a heterohexamer composed of two FlhC and four FlhD subunits. Each FlhC binds a FlhD dimer, forming a heterotrimer, and a hexamer assembles by dimerization of two heterotrimers.

It localises to the cytoplasm. Functionally, functions in complex with FlhC as a master transcriptional regulator that regulates transcription of several flagellar and non-flagellar operons by binding to their promoter region. Activates expression of class 2 flagellar genes, including fliA, which is a flagellum-specific sigma factor that turns on the class 3 genes. Also regulates genes whose products function in a variety of physiological pathways. In Burkholderia mallei (strain SAVP1), this protein is Flagellar transcriptional regulator FlhD.